We begin with the raw amino-acid sequence, 286 residues long: NAD kinase (286 aa).

Asp-74 (proton acceptor) is an active-site residue. NAD(+) is bound by residues 74–75, 148–149, Asp-178, Ala-186, 189–194, and Gln-244; these read DG, ND, and TAYNLS.

This sequence belongs to the NAD kinase family. Requires a divalent metal cation as cofactor.

The protein localises to the cytoplasm. The catalysed reaction is NAD(+) + ATP = ADP + NADP(+) + H(+). Functionally, involved in the regulation of the intracellular balance of NAD and NADP, and is a key enzyme in the biosynthesis of NADP. Catalyzes specifically the phosphorylation on 2'-hydroxyl of the adenosine moiety of NAD to yield NADP. This Campylobacter jejuni subsp. jejuni serotype O:23/36 (strain 81-176) protein is NAD kinase.